Reading from the N-terminus, the 122-residue chain is Large ribosomal subunit protein uL14 (122 aa).

It belongs to the universal ribosomal protein uL14 family. In terms of assembly, part of the 50S ribosomal subunit. Forms a cluster with proteins L3 and L19. In the 70S ribosome, L14 and L19 interact and together make contacts with the 16S rRNA in bridges B5 and B8.

Its function is as follows. Binds to 23S rRNA. Forms part of two intersubunit bridges in the 70S ribosome. The protein is Large ribosomal subunit protein uL14 of Paramagnetospirillum magneticum (strain ATCC 700264 / AMB-1) (Magnetospirillum magneticum).